The primary structure comprises 328 residues: D-cysteine desulfhydrase (328 aa).

Position 51 is an N6-(pyridoxal phosphate)lysine (Lys-51).

The protein belongs to the ACC deaminase/D-cysteine desulfhydrase family. Homodimer. It depends on pyridoxal 5'-phosphate as a cofactor.

It catalyses the reaction D-cysteine + H2O = hydrogen sulfide + pyruvate + NH4(+) + H(+). In terms of biological role, catalyzes the alpha,beta-elimination reaction of D-cysteine and of several D-cysteine derivatives. It could be a defense mechanism against D-cysteine. This is D-cysteine desulfhydrase from Escherichia coli O7:K1 (strain IAI39 / ExPEC).